The primary structure comprises 84 residues: Large ribosomal subunit protein bL27 (84 aa).

The protein belongs to the bacterial ribosomal protein bL27 family.

The sequence is that of Large ribosomal subunit protein bL27 from Kocuria rhizophila (strain ATCC 9341 / DSM 348 / NBRC 103217 / DC2201).